Reading from the N-terminus, the 267-residue chain is LysM and putative peptidoglycan-binding domain-containing protein 4 (267 aa).

Residues 1–211 are Extracellular-facing; the sequence is MRRGDPPPRA…RSNGADWGIQ (211 aa). The interval 30–64 is disordered; that stretch reads HRQEEPEASSEDEELNVMELRPRSRDSSSKEKEGV. Residues 35-45 are compositionally biased toward acidic residues; sequence PEASSEDEELN. Over residues 49 to 64 the composition is skewed to basic and acidic residues; that stretch reads LRPRSRDSSSKEKEGV. The LysM domain maps to 70 to 114; that stretch reads LERDISHEDNLSKLALQYGCKVADIKRVNNLFQEQDMYALKSIKI. N-linked (GlcNAc...) asparagine glycosylation occurs at N79. The disordered stretch occupies residues 130-152; that stretch reads RTPQQRPSHDAAPSNSAMASVSG. Over residues 142–152 the composition is skewed to polar residues; the sequence is PSNSAMASVSG. The chain crosses the membrane as a helical span at residues 212–232; it reads WWNAVIAMLLIGIVLPIFYVV. The Cytoplasmic portion of the chain corresponds to 233 to 267; that stretch reads YYKTKDSGESAVDNVGVNISVSTSNSTREYNGKSP.

Its subcellular location is the membrane. The protein is LysM and putative peptidoglycan-binding domain-containing protein 4 (lysmd4) of Danio rerio (Zebrafish).